The primary structure comprises 129 residues: Sigma factor-binding protein Crl (129 aa).

Residues 99-119 form an essential for activity region; the sequence is TQNCFHLKLVKTLEENFQLSV.

This sequence belongs to the Crl family.

The protein resides in the cytoplasm. Binds to the sigma-S subunit of RNA polymerase, activating expression of sigma-S-regulated genes. Stimulates RNA polymerase holoenzyme formation and may bind to several other sigma factors, such as sigma-70 and sigma-32. This chain is Sigma factor-binding protein Crl, found in Vibrio vulnificus (strain CMCP6).